A 112-amino-acid chain; its full sequence is Putative pterin-4-alpha-carbinolamine dehydratase (112 aa).

The protein belongs to the pterin-4-alpha-carbinolamine dehydratase family.

The catalysed reaction is (4aS,6R)-4a-hydroxy-L-erythro-5,6,7,8-tetrahydrobiopterin = (6R)-L-erythro-6,7-dihydrobiopterin + H2O. The sequence is that of Putative pterin-4-alpha-carbinolamine dehydratase from Shewanella denitrificans (strain OS217 / ATCC BAA-1090 / DSM 15013).